We begin with the raw amino-acid sequence, 72 residues long: Translation initiation factor IF-1 (72 aa).

The S1-like domain occupies 1-72 (MAKEDVIEVE…TRGRITYRYK (72 aa)). Residue Tyr-60 is modified to Phosphotyrosine.

The protein belongs to the IF-1 family. Component of the 30S ribosomal translation pre-initiation complex which assembles on the 30S ribosome in the order IF-2 and IF-3, IF-1 and N-formylmethionyl-tRNA(fMet); mRNA recruitment can occur at any time during PIC assembly.

It is found in the cytoplasm. One of the essential components for the initiation of protein synthesis. Stabilizes the binding of IF-2 and IF-3 on the 30S subunit to which N-formylmethionyl-tRNA(fMet) subsequently binds. Helps modulate mRNA selection, yielding the 30S pre-initiation complex (PIC). Upon addition of the 50S ribosomal subunit IF-1, IF-2 and IF-3 are released leaving the mature 70S translation initiation complex. This Shouchella clausii (strain KSM-K16) (Alkalihalobacillus clausii) protein is Translation initiation factor IF-1.